The chain runs to 472 residues: MGIKGLARFLVDNAPKSIQQQSIDSLIGRIIAIDASMWMYQFLAAIREGSQWGNLTNEAGESTSHISGMLSRTIRLLEAGIKPVFVFDGEPPELKMEELMKRKERREKAQQELEKAQEEGDTETIRKQLIRTIKITKEQSDDVKYMLKLLGIPVIEATSEAEAQCAELCKEGLVYGVATEDADSLTFGTPLVIRHLNFSDGKFSDSKGNSKNSLQVIKLSTVLSDLGLSMQQFVDLCILCGCDYCGTIRGIGALTAYKLLKKHKDIETIINELDKNKHPLPMSFDYIKVRELFTNPNVIKAKEFRDKLKWTNPNLEGLSEWLIKQQNFSEVRVANYCTRIKKSKGKTAQTSLDSFFTLTPKKTSENKNKEKEITKVQEVKETISNINKDTRKDSVSEWGEIKTKIIETKEDKLDFERRNKIIQEDKLNSKKEFDYNEKLQCNSTAENTPIIDNKAKVLSIKKRRINRVNYDE.

The segment at 1–106 (MGIKGLARFL…EELMKRKERR (106 aa)) is N-domain. Asp-34 is a Mg(2+) binding site. Arg-47 and Arg-72 together coordinate DNA. Mg(2+) is bound by residues Asp-88, Glu-160, Glu-162, Asp-181, and Asp-183. Residues 124–263 (TIRKQLIRTI…LTAYKLLKKH (140 aa)) form an I-domain region. Glu-160 is a DNA binding site. Residues Gly-241 and Asp-243 each contribute to the DNA site. Asp-243 provides a ligand contact to Mg(2+). Positions 348–356 (AQTSLDSFF) are interaction with PCNA.

The protein belongs to the XPG/RAD2 endonuclease family. FEN1 subfamily. Interacts with PCNA. Three molecules of FEN1 bind to one PCNA trimer with each molecule binding to one PCNA monomer. PCNA stimulates the nuclease activity without altering cleavage specificity. The cofactor is Mg(2+). Post-translationally, phosphorylated. Phosphorylation upon DNA damage induces relocalization to the nuclear plasma.

Its subcellular location is the nucleus. The protein localises to the nucleolus. The protein resides in the nucleoplasm. It is found in the mitochondrion. Structure-specific nuclease with 5'-flap endonuclease and 5'-3' exonuclease activities involved in DNA replication and repair. During DNA replication, cleaves the 5'-overhanging flap structure that is generated by displacement synthesis when DNA polymerase encounters the 5'-end of a downstream Okazaki fragment. It enters the flap from the 5'-end and then tracks to cleave the flap base, leaving a nick for ligation. Also involved in the long patch base excision repair (LP-BER) pathway, by cleaving within the apurinic/apyrimidinic (AP) site-terminated flap. Acts as a genome stabilization factor that prevents flaps from equilibrating into structures that lead to duplications and deletions. Also possesses 5'-3' exonuclease activity on nicked or gapped double-stranded DNA, and exhibits RNase H activity. Also involved in replication and repair of rDNA and in repairing mitochondrial DNA. The chain is Flap endonuclease 1 from Cryptosporidium muris (strain RN66).